The following is a 324-amino-acid chain: tRNA (cytidine(32)/guanosine(34)-2'-O)-methyltransferase (324 aa).

The S-adenosyl-L-methionine site is built by glycine 53, tryptophan 55, aspartate 75, aspartate 91, and aspartate 116. Residue lysine 156 is the Proton acceptor of the active site. Residues 221–240 (DFNQLDGPTRVIVPFVACGD) form a required for binding to WDR6 region.

Belongs to the class I-like SAM-binding methyltransferase superfamily. RNA methyltransferase RlmE family. TRM7 subfamily. As to quaternary structure, interacts with WDR6; the interaction is direct, and required for 2'-O-methylation of position 34 in substrate tRNAs.

It is found in the cytoplasm. The protein localises to the nucleus. It carries out the reaction cytidine(32)/guanosine(34) in tRNA + 2 S-adenosyl-L-methionine = 2'-O-methylcytidine(32)/2'-O-methylguanosine(34) in tRNA + 2 S-adenosyl-L-homocysteine + 2 H(+). Methylates the 2'-O-ribose of nucleotides at positions 32 and 34 of the tRNA anticodon loop of substrate tRNAs. Requisite for faithful cytoplasmic translation. Requires THADA for methylation of the cytidine at position 32 of the anticodon loop of substrate tRNAs. Requires WDR6 for methylation of the nucleotide at position 34 of the anticodon loop of substrate tRNAs. Promotes translation efficiency of the UUU codon. Plays a role in neurogenesis. Required for expression of genes involved in neurogenesis and mitochondrial translation and energy generation. Requisite for RNA-mediated gene silencing. May modify position 32 in tRNA(Arg(ACG)), tRNA(Gln(CUG)), tRNA(Leu(UAA)), tRNA(Leu(UAG)), tRNA(Leu(AAG)), tRNA(Leu(CAG)), tRNA(Phe(GAA)), tRNA(Trp(CCA)) and tRNA(Val(AAC)), and position 34 in tRNA(Phe(GAA)), tRNA(Leu(CAA)), tRNA(Leu(UAA)), tRNA(Sec(UCA)), and tRNA(Trp(CCA)). The protein is tRNA (cytidine(32)/guanosine(34)-2'-O)-methyltransferase of Mus musculus (Mouse).